The chain runs to 209 residues: Germin-like protein (209 aa).

The first 18 residues, 1-18 (MIVPIFFLFSLLFSSSHG), serve as a signal peptide directing secretion. C24 and C39 are joined by a disulfide. Residues 53 to 199 (SGLGITGNTT…ASFLDPAEIK (147 aa)) enclose the Cupin type-1 domain. N-linked (GlcNAc...) asparagine glycosylation occurs at N60. Positions 101, 103, 108, and 147 each coordinate Mn(2+).

It localises to the secreted. The protein resides in the extracellular space. It is found in the apoplast. Functionally, has antibacterial activity against B.subtilis (MIC=5 ug), B.cereus (MIC=50 ug), A.hydrophila (MIC=2.5 ug), S.marcescens(MIC=10 ug), S.enterica (MIC=10 ug), P.entomophila (MIC=2.5 ug) and P.rhodesiae (MIC=10 ug). Has antifungal activity against F.solani KACC 40384 and F.oxysporum KACC 40032. Probably has no oxalate oxidase activity even if the active site is conserved. The polypeptide is Germin-like protein (Morus alba (White mulberry)).